The chain runs to 169 residues: tRNA (cytidine(56)-2'-O)-methyltransferase (169 aa).

S-adenosyl-L-methionine-binding positions include Leu-77, 103 to 107 (GSEKV), and 121 to 128 (IGNQPHSE).

It belongs to the aTrm56 family. In terms of assembly, homodimer.

Its subcellular location is the cytoplasm. The catalysed reaction is cytidine(56) in tRNA + S-adenosyl-L-methionine = 2'-O-methylcytidine(56) in tRNA + S-adenosyl-L-homocysteine + H(+). Its function is as follows. Specifically catalyzes the AdoMet-dependent 2'-O-ribose methylation of cytidine at position 56 in tRNAs. The polypeptide is tRNA (cytidine(56)-2'-O)-methyltransferase (Sulfurisphaera tokodaii (strain DSM 16993 / JCM 10545 / NBRC 100140 / 7) (Sulfolobus tokodaii)).